Consider the following 54-residue polypeptide: MHDIAGVTNETGNVLGMMPHPERAVEALLGGTDGLGVFQSLINQTEGADVRGAR.

The 51-residue stretch at 1–51 (MHDIAGVTNETGNVLGMMPHPERAVEALLGGTDGLGVFQSLINQTEGADVR) folds into the Glutamine amidotransferase type-1 domain. Catalysis depends on residues histidine 20 and glutamate 22.

In terms of assembly, part of the FGAM synthase complex composed of 1 PurL, 1 PurQ and 2 PurS subunits.

The protein resides in the cytoplasm. The catalysed reaction is N(2)-formyl-N(1)-(5-phospho-beta-D-ribosyl)glycinamide + L-glutamine + ATP + H2O = 2-formamido-N(1)-(5-O-phospho-beta-D-ribosyl)acetamidine + L-glutamate + ADP + phosphate + H(+). It catalyses the reaction L-glutamine + H2O = L-glutamate + NH4(+). It functions in the pathway purine metabolism; IMP biosynthesis via de novo pathway; 5-amino-1-(5-phospho-D-ribosyl)imidazole from N(2)-formyl-N(1)-(5-phospho-D-ribosyl)glycinamide: step 1/2. Its function is as follows. Part of the phosphoribosylformylglycinamidine synthase complex involved in the purines biosynthetic pathway. Catalyzes the ATP-dependent conversion of formylglycinamide ribonucleotide (FGAR) and glutamine to yield formylglycinamidine ribonucleotide (FGAM) and glutamate. The FGAM synthase complex is composed of three subunits. PurQ produces an ammonia molecule by converting glutamine to glutamate. PurL transfers the ammonia molecule to FGAR to form FGAM in an ATP-dependent manner. PurS interacts with PurQ and PurL and is thought to assist in the transfer of the ammonia molecule from PurQ to PurL. This Lacticaseibacillus casei (Lactobacillus casei) protein is Phosphoribosylformylglycinamidine synthase subunit PurQ (purQ).